Consider the following 174-residue polypeptide: Co-chaperone protein HscB homolog (174 aa).

In terms of domain architecture, J spans N2–L74.

It belongs to the HscB family. Interacts with HscA and stimulates its ATPase activity.

In terms of biological role, co-chaperone involved in the maturation of iron-sulfur cluster-containing proteins. Seems to help targeting proteins to be folded toward HscA. The polypeptide is Co-chaperone protein HscB homolog (Shewanella denitrificans (strain OS217 / ATCC BAA-1090 / DSM 15013)).